The primary structure comprises 232 residues: MSGTKFRTGGTKEDDLLEFVKVGKLLEVKDLIENQGVKADCKDEDERTPLHWAAAKGQISVAQYLMDNCKCSPNTNDDGGWTPLTSATSAGHTHMVKLLLEFGADPNTVNDSKRTPLHYASSKGRSDIVDLLLTHGAKNRKDDTGSAPIHRASSNGSVATVERLLKGEANINSTNNEGDTPLHIAAEYNHEDVVECLLKHGADTTIENKDSKTPIDMSSSQTIKYLIKEFKK.

ANK repeat units follow at residues 45–75, 79–108, 112–141, 144–173, 177–206, and 210–232; these read DERT…SPNT, GGWT…DPNT, SKRT…KNRK, TGSA…NINS, EGDT…DTTI, and DSKT…EFKK.

Functionally, acts as a chaperone during the assembly of the 26S proteasome, specifically of the 19S regulatory complex (RC). In Dictyostelium discoideum (Social amoeba), this protein is 26S proteasome non-ATPase regulatory subunit 10 (psmD10).